Here is a 338-residue protein sequence, read N- to C-terminus: Phosphoribosylformylglycinamidine cyclo-ligase (338 aa).

It belongs to the AIR synthase family.

Its subcellular location is the cytoplasm. The enzyme catalyses 2-formamido-N(1)-(5-O-phospho-beta-D-ribosyl)acetamidine + ATP = 5-amino-1-(5-phospho-beta-D-ribosyl)imidazole + ADP + phosphate + H(+). It functions in the pathway purine metabolism; IMP biosynthesis via de novo pathway; 5-amino-1-(5-phospho-D-ribosyl)imidazole from N(2)-formyl-N(1)-(5-phospho-D-ribosyl)glycinamide: step 2/2. This chain is Phosphoribosylformylglycinamidine cyclo-ligase, found in Thermoplasma acidophilum (strain ATCC 25905 / DSM 1728 / JCM 9062 / NBRC 15155 / AMRC-C165).